The following is a 300-amino-acid chain: Porphobilinogen deaminase (300 aa).

Cys242 carries the post-translational modification S-(dipyrrolylmethanemethyl)cysteine.

This sequence belongs to the HMBS family. Monomer. Dipyrromethane is required as a cofactor.

It catalyses the reaction 4 porphobilinogen + H2O = hydroxymethylbilane + 4 NH4(+). It participates in porphyrin-containing compound metabolism; protoporphyrin-IX biosynthesis; coproporphyrinogen-III from 5-aminolevulinate: step 2/4. Tetrapolymerization of the monopyrrole PBG into the hydroxymethylbilane pre-uroporphyrinogen in several discrete steps. This is Porphobilinogen deaminase from Blochmanniella pennsylvanica (strain BPEN).